Reading from the N-terminus, the 102-residue chain is Small ribosomal subunit protein uS10 (102 aa).

Belongs to the universal ribosomal protein uS10 family. In terms of assembly, part of the 30S ribosomal subunit.

Functionally, involved in the binding of tRNA to the ribosomes. This is Small ribosomal subunit protein uS10 from Akkermansia muciniphila (strain ATCC BAA-835 / DSM 22959 / JCM 33894 / BCRC 81048 / CCUG 64013 / CIP 107961 / Muc).